The primary structure comprises 255 residues: Acetylglutamate kinase (255 aa).

Residues 40–41, R62, and N153 each bind substrate; that span reads GG.

Belongs to the acetylglutamate kinase family. ArgB subfamily.

It is found in the cytoplasm. It carries out the reaction N-acetyl-L-glutamate + ATP = N-acetyl-L-glutamyl 5-phosphate + ADP. The protein operates within amino-acid biosynthesis; L-arginine biosynthesis; N(2)-acetyl-L-ornithine from L-glutamate: step 2/4. Its function is as follows. Catalyzes the ATP-dependent phosphorylation of N-acetyl-L-glutamate. The sequence is that of Acetylglutamate kinase from Bacillus thuringiensis (strain Al Hakam).